Here is a 140-residue protein sequence, read N- to C-terminus: MRHGFRGRRFNRTVEHRKAMFANMSAALIKHEQIITTLPKAKDLRPVVEKLITLGKRGDLHARRQAIAQIRDEAMVKKLFEVLGPRYQTRPGGYCRIMKAGFRYGDNAPMAVIEFVDRDVNARGQDSGPTQAAASQTEAA.

This sequence belongs to the bacterial ribosomal protein bL17 family. Part of the 50S ribosomal subunit. Contacts protein L32.

The chain is Large ribosomal subunit protein bL17 from Methylobacterium nodulans (strain LMG 21967 / CNCM I-2342 / ORS 2060).